Here is a 93-residue protein sequence, read N- to C-terminus: Putative defensin-like protein 282 (93 aa).

An N-terminal signal peptide occupies residues 1 to 25 (MANATSFIALAYLLASALMTTVVLG). 3 cysteine pairs are disulfide-bonded: Cys51–Cys83, Cys66–Cys90, and Cys72–Cys92.

Belongs to the DEFL family.

It localises to the secreted. The chain is Putative defensin-like protein 282 from Arabidopsis thaliana (Mouse-ear cress).